The chain runs to 75 residues: Small ribosomal subunit protein bS18 (75 aa).

The protein belongs to the bacterial ribosomal protein bS18 family. In terms of assembly, part of the 30S ribosomal subunit. Forms a tight heterodimer with protein bS6.

Its function is as follows. Binds as a heterodimer with protein bS6 to the central domain of the 16S rRNA, where it helps stabilize the platform of the 30S subunit. In Rhodobacter capsulatus (strain ATCC BAA-309 / NBRC 16581 / SB1003), this protein is Small ribosomal subunit protein bS18 (rbsR).